The chain runs to 341 residues: MDLVNDLILRAARGEPTPRPPVWFMRQAGRYQKAYRKLRERYTLPEIVQNPEVCAEVTLLPVKALGVDAAILFADITTPLYGMGVDLSLVENKGPVIHNPVRDEKGVEALRPLVPEEAVPFVLETIRILKRELPVPLIGFAGAPFTLASYLVEGGPSRRFLRVKALMYGEEALWHRLMEKLTEAMARYLRAQAEAGADLLQVFDSWVGALSPADYRRYVKPHMERLFQSLRPVGVPVIHFGVGTMGLLEDMKEAGGDVLGLDHHTPLPWARALLGATPVQGNLDPAVLLAPKGVIRREVQRILKENGGKSGHIFNLGHGIVPETPEENVRYVVELIQEVAA.

Substrate contacts are provided by residues R26–R30, D75, Y150, S205, and H318.

The protein belongs to the uroporphyrinogen decarboxylase family. In terms of assembly, homodimer.

The protein localises to the cytoplasm. The enzyme catalyses uroporphyrinogen III + 4 H(+) = coproporphyrinogen III + 4 CO2. It functions in the pathway porphyrin-containing compound metabolism; protoporphyrin-IX biosynthesis; coproporphyrinogen-III from 5-aminolevulinate: step 4/4. In terms of biological role, catalyzes the decarboxylation of four acetate groups of uroporphyrinogen-III to yield coproporphyrinogen-III. In Thermus thermophilus (strain ATCC 27634 / DSM 579 / HB8), this protein is Uroporphyrinogen decarboxylase.